Reading from the N-terminus, the 70-residue chain is DNA-directed RNA polymerase subunit omega (70 aa).

Belongs to the RNA polymerase subunit omega family. In terms of assembly, the RNAP catalytic core consists of 2 alpha, 1 beta, 1 beta' and 1 omega subunit. When a sigma factor is associated with the core the holoenzyme is formed, which can initiate transcription.

The enzyme catalyses RNA(n) + a ribonucleoside 5'-triphosphate = RNA(n+1) + diphosphate. Functionally, promotes RNA polymerase assembly. Latches the N- and C-terminal regions of the beta' subunit thereby facilitating its interaction with the beta and alpha subunits. The protein is DNA-directed RNA polymerase subunit omega of Bacillus cereus (strain G9842).